Consider the following 226-residue polypeptide: Small ribosomal subunit protein uS3 (226 aa).

The KH type-2 domain maps to 39-107; that stretch reads IRKFIKNKLY…NILINITEIK (69 aa).

The protein belongs to the universal ribosomal protein uS3 family. As to quaternary structure, part of the 30S ribosomal subunit. Forms a tight complex with proteins S10 and S14.

Functionally, binds the lower part of the 30S subunit head. Binds mRNA in the 70S ribosome, positioning it for translation. The sequence is that of Small ribosomal subunit protein uS3 from Acetivibrio thermocellus (strain ATCC 27405 / DSM 1237 / JCM 9322 / NBRC 103400 / NCIMB 10682 / NRRL B-4536 / VPI 7372) (Clostridium thermocellum).